The primary structure comprises 478 residues: Glutamine synthetase (478 aa).

Residue lysine 14 forms an Isoglutamyl lysine isopeptide (Lys-Gln) (interchain with Q-Cter in protein Pup) linkage. Residues 16-100 enclose the GS beta-grasp domain; it reads ENVEYVDIRF…MNFFVHDPFT (85 aa). The region spanning 108–478 is the GS catalytic domain; the sequence is PRNVARKAEN…PYEFSLYYDV (371 aa). Mg(2+) is bound by residues glutamate 133 and glutamate 135. Glutamate 214 contacts ATP. Mg(2+)-binding residues include glutamate 219 and glutamate 227. 230–232 contributes to the ATP binding site; it reads YKF. L-glutamate-binding positions include 271–272 and glycine 272; that span reads NG. Histidine 276 is a Mg(2+) binding site. ATP-binding positions include 278–280 and serine 280; that span reads HQS. Residues arginine 329, glutamate 335, and arginine 347 each coordinate L-glutamate. The ATP site is built by arginine 347, arginine 352, and lysine 361. Residue glutamate 366 participates in Mg(2+) binding. Arginine 368 is a binding site for L-glutamate. Tyrosine 406 carries the O-AMP-tyrosine modification.

Belongs to the glutamine synthetase family. In terms of assembly, oligomer of 12 subunits arranged in the form of two hexagons. Mg(2+) is required as a cofactor.

The protein localises to the cytoplasm. The enzyme catalyses L-glutamate + NH4(+) + ATP = L-glutamine + ADP + phosphate + H(+). When cellular nitrogen levels are high, the C-terminal adenylyl transferase (AT) of GlnE inhibits GlnA by covalent transfer of an adenylyl group from ATP to Tyr-406. Conversely, when nitrogen levels are low, the N-terminal adenylyl removase (AR) of GlnE activates GlnA by removing the adenylyl group by phosphorolysis. The fully adenylated enzyme complex is inactive. In terms of biological role, involved in nitrogen metabolism via ammonium assimilation. Catalyzes the ATP-dependent biosynthesis of glutamine from glutamate and ammonia. This chain is Glutamine synthetase, found in Mycolicibacterium smegmatis (strain ATCC 700084 / mc(2)155) (Mycobacterium smegmatis).